Reading from the N-terminus, the 203-residue chain is ADP-ribosylation factor-like protein 6-interacting protein 1 (203 aa).

The Cytoplasmic portion of the chain corresponds to 1 to 41; the sequence is MAEGDNRSTNLLAAETASLEEQLQGWGEVMLMADKVLRWER. A helical membrane pass occupies residues 42–62; the sequence is AWFPPAIMGVVSLVFLIIYYL. At 63–65 the chain is on the lumenal side; the sequence is DPS. The chain crosses the membrane as a helical span at residues 66-86; the sequence is VLSGVSCFVMFLCLADYLVPI. Topologically, residues 87–133 are cytoplasmic; that stretch reads LAPRIFGSNKWTTEQQQRFHEICSNLVKTRRRAVGWWKRLFTLKEEK. The helical transmembrane segment at 134–175 threads the bilayer; sequence PKMYFMTMIVSLAAVAWVGQQVHNLLLTYLIVTSLLLLPGLN. Topologically, residues 176–203 are lumenal; the sequence is QHGIILKYIGMAKREINKLLKQKEKKNE.

The protein belongs to the ARL6ip family. Homooligomer. Heterodimer with ARL6IP5. Interacts with ARL6. Interacts with TMEM33. Interacts with ATL1. As to expression, expressed in all hematopoietic cell lineages, but the highest level of expression is found in early myeloid progenitor cells. Expressed in brain, bone marrow, thymus and lung. Expressed at low level in liver, kidney and spleen. Not detected in heart.

It is found in the endomembrane system. Its subcellular location is the endoplasmic reticulum membrane. The protein localises to the endoplasmic reticulum. Functionally, positively regulates SLC1A1/EAAC1-mediated glutamate transport by increasing its affinity for glutamate in a PKC activity-dependent manner. Promotes the catalytic efficiency of SLC1A1/EAAC1 probably by reducing its interaction with ARL6IP5, a negative regulator of SLC1A1/EAAC1-mediated glutamate transport. Plays a role in the formation and stabilization of endoplasmic reticulum tubules. Negatively regulates apoptosis, possibly by modulating the activity of caspase-9 (CASP9). Inhibits cleavage of CASP9-dependent substrates and downstream markers of apoptosis but not CASP9 itself. May be involved in protein transport, membrane trafficking, or cell signaling during hematopoietic maturation. This is ADP-ribosylation factor-like protein 6-interacting protein 1 (ARL6IP1) from Homo sapiens (Human).